The sequence spans 171 residues: ATP synthase subunit b (171 aa).

Residues 13–33 form a helical membrane-spanning segment; the sequence is GVEWGTTFVTLVTFVILIILL.

It belongs to the ATPase B chain family. In terms of assembly, F-type ATPases have 2 components, F(1) - the catalytic core - and F(0) - the membrane proton channel. F(1) has five subunits: alpha(3), beta(3), gamma(1), delta(1), epsilon(1). F(0) has three main subunits: a(1), b(2) and c(10-14). The alpha and beta chains form an alternating ring which encloses part of the gamma chain. F(1) is attached to F(0) by a central stalk formed by the gamma and epsilon chains, while a peripheral stalk is formed by the delta and b chains.

It localises to the cell membrane. Its function is as follows. F(1)F(0) ATP synthase produces ATP from ADP in the presence of a proton or sodium gradient. F-type ATPases consist of two structural domains, F(1) containing the extramembraneous catalytic core and F(0) containing the membrane proton channel, linked together by a central stalk and a peripheral stalk. During catalysis, ATP synthesis in the catalytic domain of F(1) is coupled via a rotary mechanism of the central stalk subunits to proton translocation. In terms of biological role, component of the F(0) channel, it forms part of the peripheral stalk, linking F(1) to F(0). This chain is ATP synthase subunit b, found in Staphylococcus epidermidis (strain ATCC 12228 / FDA PCI 1200).